We begin with the raw amino-acid sequence, 132 residues long: Small ribosomal subunit protein uS8 (132 aa).

The protein belongs to the universal ribosomal protein uS8 family. In terms of assembly, part of the 30S ribosomal subunit. Contacts proteins S5 and S12.

In terms of biological role, one of the primary rRNA binding proteins, it binds directly to 16S rRNA central domain where it helps coordinate assembly of the platform of the 30S subunit. This chain is Small ribosomal subunit protein uS8, found in Kineococcus radiotolerans (strain ATCC BAA-149 / DSM 14245 / SRS30216).